Here is a 199-residue protein sequence, read N- to C-terminus: Outer-membrane lipoprotein LolB (199 aa).

The signal sequence occupies residues 1 to 28 (MSACPAPRSPVRWLHAFTLFLLLAVLAG). A lipid anchor (N-palmitoyl cysteine) is attached at C29. C29 is lipidated: S-diacylglycerol cysteine.

The protein belongs to the LolB family. As to quaternary structure, monomer.

It is found in the cell outer membrane. Plays a critical role in the incorporation of lipoproteins in the outer membrane after they are released by the LolA protein. This is Outer-membrane lipoprotein LolB from Bordetella pertussis (strain Tohama I / ATCC BAA-589 / NCTC 13251).